A 250-amino-acid chain; its full sequence is MSRRYDSRTTIFSPEGRLYQVEYAMEAIGNAGSALGVLAADGVVLVGEKKVTSKLLQTSRSAEKMYKIDSHLACAVAGIMSDANILLNTARLHAQRYALSYQEPIPVEQLVQSLCDTKQGYTQFGGLRPFGVSFLFAGWDKHHGFQLYMSDPSGNYSGWKAAAVGANSQAAQSMLKQDYRDGLTREEAVALALKVLSKTMDSTSLTAEKLELAEVFLQPGTGEVQYQVCSPEAMGKLLAKAGLSQPAPEA.

In terms of assembly, the 26S proteasome consists of a 20S proteasome core and two 19S regulatory subunits. The 20S proteasome core is composed of 28 subunits that are arranged in four stacked rings, resulting in a barrel-shaped structure. The two end rings are each formed by seven alpha subunits, and the two central rings are each formed by seven beta subunits. The catalytic chamber with the active sites is on the inside of the barrel.

The protein resides in the cytoplasm. It is found in the nucleus. Its function is as follows. The proteasome is a multicatalytic proteinase complex which is characterized by its ability to cleave peptides with Arg, Phe, Tyr, Leu, and Glu adjacent to the leaving group at neutral or slightly basic pH. The proteasome has an ATP-dependent proteolytic activity. The chain is Proteasome subunit alpha type-4-2 from Oryza sativa subsp. indica (Rice).